The sequence spans 357 residues: Alkanal monooxygenase alpha chain (357 aa).

This sequence belongs to the bacterial luciferase oxidoreductase family. As to quaternary structure, heterodimer of an alpha and a beta chain.

The catalysed reaction is a long-chain fatty aldehyde + FMNH2 + O2 = a long-chain fatty acid + hnu + FMN + H2O + 2 H(+). In terms of biological role, light-emitting reaction in luminous bacteria. This is Alkanal monooxygenase alpha chain (luxA) from Kryptophanaron alfredi symbiont.